Consider the following 302-residue polypeptide: Tyrosine--tRNA ligase 2 (302 aa).

Tyr33 provides a ligand contact to L-tyrosine. Residues 38–47 carry the 'HIGH' region motif; it reads PTADSLHLGH. Residues Tyr160 and Gln164 each coordinate L-tyrosine. A 'KMSKS' region motif is present at residues 220-224; the sequence is KFGKS. An ATP-binding site is contributed by Lys223.

The protein belongs to the class-I aminoacyl-tRNA synthetase family. TyrS type 1 subfamily. Homodimer.

It is found in the cytoplasm. It catalyses the reaction tRNA(Tyr) + L-tyrosine + ATP = L-tyrosyl-tRNA(Tyr) + AMP + diphosphate + H(+). Functionally, catalyzes the attachment of tyrosine to tRNA(Tyr) in a two-step reaction: tyrosine is first activated by ATP to form Tyr-AMP and then transferred to the acceptor end of tRNA(Tyr). This Streptococcus thermophilus (strain CNRZ 1066) protein is Tyrosine--tRNA ligase 2 (tyrS2).